A 423-amino-acid chain; its full sequence is Carboxypeptidase S1 (423 aa).

Disulfide bonds link Cys-8/Cys-68, Cys-55/Cys-300, Cys-223/Cys-246, and Cys-230/Cys-239. The active site involves Ser-143. Residue Asn-200 is glycosylated (N-linked (GlcNAc...) asparagine). Asp-340 is an active-site residue. Substrate is bound at residue Cys-343. Residue His-397 is part of the active site. Glu-398 contributes to the substrate binding site.

It belongs to the peptidase S10 family.

It catalyses the reaction Preferential release of a C-terminal arginine or lysine residue.. This Penicillium janthinellum (Penicillium vitale) protein is Carboxypeptidase S1.